Consider the following 1225-residue polypeptide: Catenin delta-2 (1225 aa).

4 disordered regions span residues 1-51 (MFAR…TSAI), 87-117 (SETGSMSSMSSAEEQFQWQSQDGQKDIEDEL), 134-242 (SGIL…HLPD), and 256-312 (SSTL…KSYS). 2 stretches are compositionally biased toward polar residues: residues 20–51 (QPSSASEKTSSLSPGLNTSNGDGSETETTSAI) and 98–108 (AEEQFQWQSQD). A coiled-coil region spans residues 49–84 (SAILASVKEQELQFERLTRELEAERQIVASQLERCK). The span at 149-160 (SLLSQSALQLNS) shows a compositional bias: low complexity. Composition is skewed to polar residues over residues 172 to 187 (YHSNQTLALGETTPSQ) and 195 to 209 (ARATGQSFSQGTTSR). Arg-209 carries the omega-N-methylarginine modification. The segment covering 217 to 229 (EPAPPPPPPPREP) has biased composition (pro residues). At Arg-264 the chain carries Omega-N-methylarginine. Ser-267 and Ser-276 each carry phosphoserine. Arg-282 and Arg-296 each carry omega-N-methylarginine. Residues 299-312 (SPKQSPSRLAKSYS) show a composition bias toward polar residues. Phosphoserine occurs at positions 327, 360, 415, and 461. Residues 394-438 (GSRASYSSQHGHLGPELRALQSPEHHIDPIYEDRVYQKPPMRSLS) form an ARM 1 repeat. Disordered regions lie at residues 432-483 (PPMR…NAAA) and 514-542 (SPYSKSGPALPPEGTLARSPSIDSIQKDP). Positions 469–478 (LQRTGSQHGP) are enriched in polar residues. Ser-514 carries the phosphoserine modification. Position 516 is a phosphotyrosine (Tyr-516). ARM repeat units lie at residues 540 to 579 (KDPREFGWRDPELPEVIQMLQHQFPSVQSNAAAYLQHLCF), 582 to 621 (NKIKAEIRRQGGIQLLVDLLDHRMTEVHRSACGALRNLVY), 626 to 666 (DDNK…NLSS), 682 to 724 (LTNA…NVSS), 728 to 773 (EARR…NLSY), 835 to 875 (PKGI…NLAA), 882 to 921 (VYIRAAVRKEKGLPILVELLRIDNDRVVCAVATALRNMAL), and 975 to 1018 (MENA…SMWQ). The interval 1042 to 1077 (TIERDRQRPYSSSRTPSISPVRVSPNNRSASAPASP) is disordered. Residues 1050–1059 (PYSSSRTPSI) are compositionally biased toward polar residues. Residues Ser-1065 and Ser-1076 each carry the phosphoserine modification. The span at 1065–1077 (SPNNRSASAPASP) shows a compositional bias: low complexity.

Belongs to the beta-catenin family. In terms of assembly, binds to E-cadherin at a juxtamembrane site within the cytoplasmic domain. Interacts with PDZD2. Interacts with ZBTB33. Binds to PSEN1. Interacts with ARHGEF28. Interacts (via the extreme C-terminus) with FRMPD2 (via the PDZ 2 domain). Interacts with CDK5. Interacts with CTNNB1. Interacts with GSK3A and GSK3B. Interacts with DNM2. Interacts with CCDC85B. O-glycosylated. In terms of processing, phosphorylated by CDK5. Phosphorylated by GSK3B. As to expression, expressed in brain; highest expression is observed in fetal brain.

It localises to the nucleus. It is found in the cell junction. The protein resides in the adherens junction. Its subcellular location is the cell projection. The protein localises to the dendrite. It localises to the perikaryon. Functionally, has a critical role in neuronal development, particularly in the formation and/or maintenance of dendritic spines and synapses. Involved in the regulation of Wnt signaling. It probably acts on beta-catenin turnover, facilitating beta-catenin interaction with GSK3B, phosphorylation, ubiquitination and degradation. Functions as a transcriptional activator when bound to ZBTB33. May be involved in neuronal cell adhesion and tissue morphogenesis and integrity by regulating adhesion molecules. The sequence is that of Catenin delta-2 (CTNND2) from Homo sapiens (Human).